The primary structure comprises 321 residues: Basic peroxidase (321 aa).

An N-terminal signal peptide occupies residues 1–30 (MSYHKSSGTTLMVPLFMLLISVNYFMSCNA). Gln-31 bears the Pyrrolidone carboxylic acid mark. Intrachain disulfides connect Cys-41/Cys-117, Cys-74/Cys-79, Cys-123/Cys-317, and Cys-202/Cys-228. Residue His-72 is the Proton acceptor of the active site. Ca(2+) contacts are provided by Asp-73, Val-76, Gly-78, Asp-80, and Ser-82. A substrate-binding site is contributed by Pro-165. Residue His-195 coordinates heme b. Thr-196 provides a ligand contact to Ca(2+). Residues Asn-211 and Asn-221 are each glycosylated (N-linked (GlcNAc...) asparagine). Residues Asp-241, Thr-244, and Asp-249 each contribute to the Ca(2+) site.

The protein belongs to the peroxidase family. Classical plant (class III) peroxidase subfamily. The cofactor is heme b. Ca(2+) is required as a cofactor. In terms of processing, N-glycosylated. As to expression, expressed in tracheary elements, roots, young and old hypocotyls, and stems in the partially glycosylated form and in roots and young hypocotyls in the fully glycosylated form. None of the isoforms is significantly expressed in leaves or cotyledons.

The protein localises to the secreted. It carries out the reaction 2 a phenolic donor + H2O2 = 2 a phenolic radical donor + 2 H2O. Removal of H(2)O(2), oxidation of toxic reductants, biosynthesis and degradation of lignin, suberization, auxin catabolism, response to environmental stresses such as wounding, pathogen attack and oxidative stress. These functions might be dependent on each isozyme/isoform in each plant tissue. Involved in the synthesis of highly polymerized lignins. This Zinnia elegans (Garden zinnia) protein is Basic peroxidase (POD3).